We begin with the raw amino-acid sequence, 509 residues long: ATP synthase subunit alpha (509 aa).

169–176 (GDRQTGKT) is a binding site for ATP.

Belongs to the ATPase alpha/beta chains family. In terms of assembly, F-type ATPases have 2 components, CF(1) - the catalytic core - and CF(0) - the membrane proton channel. CF(1) has five subunits: alpha(3), beta(3), gamma(1), delta(1), epsilon(1). CF(0) has four main subunits: a(1), b(1), b'(1) and c(9-12).

It is found in the cell inner membrane. It carries out the reaction ATP + H2O + 4 H(+)(in) = ADP + phosphate + 5 H(+)(out). Its function is as follows. Produces ATP from ADP in the presence of a proton gradient across the membrane. The alpha chain is a regulatory subunit. In Bradyrhizobium sp. (strain BTAi1 / ATCC BAA-1182), this protein is ATP synthase subunit alpha.